We begin with the raw amino-acid sequence, 490 residues long: Betaine aldehyde dehydrogenase (490 aa).

Threonine 26, isoleucine 27, and aspartate 93 together coordinate K(+). 150–152 (GAW) contacts NAD(+). The Charge relay system role is filled by lysine 162. 176–179 (KPSE) provides a ligand contact to NAD(+). Valine 180 lines the K(+) pocket. Position 230–233 (230–233 (GVAS)) interacts with NAD(+). Leucine 246 contacts K(+). Catalysis depends on glutamate 252, which acts as the Proton acceptor. NAD(+) is bound by residues glycine 254, cysteine 286, and glutamate 387. The Nucleophile role is filled by cysteine 286. At cysteine 286 the chain carries Cysteine sulfenic acid (-SOH). The K(+) site is built by lysine 457 and glycine 460. Residue glutamate 464 is the Charge relay system of the active site.

Belongs to the aldehyde dehydrogenase family. In terms of assembly, dimer of dimers. It depends on K(+) as a cofactor.

The enzyme catalyses betaine aldehyde + NAD(+) + H2O = glycine betaine + NADH + 2 H(+). It functions in the pathway amine and polyamine biosynthesis; betaine biosynthesis via choline pathway; betaine from betaine aldehyde: step 1/1. In terms of biological role, involved in the biosynthesis of the osmoprotectant glycine betaine. Catalyzes the irreversible oxidation of betaine aldehyde to the corresponding acid. The sequence is that of Betaine aldehyde dehydrogenase from Shigella flexneri serotype 5b (strain 8401).